The sequence spans 595 residues: Probable L-gulonolactone oxidase 1 (595 aa).

The signal sequence occupies residues 1–18 (MAFWLSLIFFCFCTFASS). The region spanning 47 to 229 (SICEAAKVEY…SQVTFQLQPM (183 aa)) is the FAD-binding PCMH-type domain.

This sequence belongs to the oxygen-dependent FAD-linked oxidoreductase family. Requires FAD as cofactor.

It catalyses the reaction L-gulono-1,4-lactone + O2 = L-ascorbate + H2O2 + H(+). The protein operates within cofactor biosynthesis; L-ascorbate biosynthesis. In terms of biological role, may be involved in the biosynthesis of ascorbic acid. In Arabidopsis thaliana (Mouse-ear cress), this protein is Probable L-gulonolactone oxidase 1.